The chain runs to 127 residues: Multifunctional methyltransferase subunit trm112 (127 aa).

Residues 2-123 (KVMTLNFLTC…KNGVANFLLP (122 aa)) enclose the TRM112 domain.

The protein belongs to the TRM112 family. In terms of assembly, heterodimer of mtq2-rmt-1/trm112, forming the eRF1 methyltransferase. Rmt-1/trm112 is necessary for the solubility and activity of the catalytic subunit mtq2. Interacts with trm11; required for full tRNA methyltransferase activity. Interacts with bud23; required for full rRNA methyltransferase activity.

The protein localises to the cytoplasm. It is found in the nucleus. Its function is as follows. Acts as an activator of both rRNA/tRNA and protein methyltransferases. Together with methyltransferase mtq2, required for the methylation of eRF1 on 'Gln-182'. Together with methyltransferase trm11, required for the formation of 2-methylguanosine at position 10 (m2G10) in tRNA. Together with methyltransferase bud23, required for the formation of a 7-methylguanine in 18S rRNA. Involved in biogenesis of both 40S and 60S ribosomal subunits. This is Multifunctional methyltransferase subunit trm112 (rmt-1) from Neurospora crassa (strain ATCC 24698 / 74-OR23-1A / CBS 708.71 / DSM 1257 / FGSC 987).